A 325-amino-acid chain; its full sequence is Beta-ketoacyl-[acyl-carrier-protein] synthase III (325 aa).

Active-site residues include Cys-112 and His-250. Residues Gln-251–Arg-255 form an ACP-binding region. Residue Asn-280 is part of the active site.

Belongs to the thiolase-like superfamily. FabH family. In terms of assembly, homodimer.

Its subcellular location is the cytoplasm. The catalysed reaction is malonyl-[ACP] + acetyl-CoA + H(+) = 3-oxobutanoyl-[ACP] + CO2 + CoA. The protein operates within lipid metabolism; fatty acid biosynthesis. Functionally, catalyzes the condensation reaction of fatty acid synthesis by the addition to an acyl acceptor of two carbons from malonyl-ACP. Catalyzes the first condensation reaction which initiates fatty acid synthesis and may therefore play a role in governing the total rate of fatty acid production. Possesses both acetoacetyl-ACP synthase and acetyl transacylase activities. Its substrate specificity determines the biosynthesis of branched-chain and/or straight-chain of fatty acids. The protein is Beta-ketoacyl-[acyl-carrier-protein] synthase III of Lactococcus lactis subsp. cremoris (strain SK11).